The following is a 118-amino-acid chain: Deoxynogalonate monooxygenase (118 aa).

The region spanning 14 to 100 is the ABM domain; sequence VTFVNRFTVH…ALSTSEHGLF (87 aa).

Homodimer.

It carries out the reaction deoxynogalonate + O2 = nogalonate + H2O + H(+). The protein operates within antibiotic biosynthesis. In terms of biological role, involved in the biosynthesis of the anthracycline (aromatic polyketide) antibiotic nogalamycin. Catalyzes the oxygenation of 12-deoxy-nogalonic acid at position 12 to yield nogalonic acid. The sequence is that of Deoxynogalonate monooxygenase from Streptomyces nogalater.